A 687-amino-acid polypeptide reads, in one-letter code: Probable WRKY transcription factor 2 (687 aa).

The disordered stretch occupies residues tyrosine 197–tyrosine 276. Polar residues-rich tracts occupy residues asparagine 199 to glutamine 208 and asparagine 219 to glutamate 249. Residues alanine 267 to proline 331 constitute a DNA-binding region (WRKY 1). Zn(2+) is bound by residues cysteine 298, cysteine 303, histidine 326, and histidine 328. Disordered stretches follow at residues glycine 324–phenylalanine 384 and phenylalanine 416–arginine 453. Over residues arginine 354–glutamate 379 the composition is skewed to polar residues. Residues tyrosine 435–glycine 444 show a composition bias toward gly residues. Positions serine 481–proline 546 form a DNA-binding region, WRKY 2. Zn(2+)-binding residues include cysteine 512, cysteine 517, histidine 541, and histidine 543. The segment at tyrosine 537–phenylalanine 599 is disordered. The segment covering histidine 553–glycine 565 has biased composition (gly residues). Residues histidine 578–arginine 589 are compositionally biased toward basic and acidic residues. A compositionally biased stretch (polar residues) spans glutamine 590 to phenylalanine 599.

This sequence belongs to the WRKY group I family. In terms of tissue distribution, low expression in senescent leaves. Expressed in both the unfertilized egg cell and the pollen tube.

It localises to the nucleus. Transcription factor. Regulates WOX8 and WOX9 expression and basal cell division patterns during early embryogenesis. Interacts specifically with the W box (5'-(T)TGAC[CT]-3'), a frequently occurring elicitor-responsive cis-acting element. Required to repolarize the zygote from a transient symmetric state. The polypeptide is Probable WRKY transcription factor 2 (Arabidopsis thaliana (Mouse-ear cress)).